The sequence spans 397 residues: Ethanolaminephosphotransferase 1 (397 aa).

A2 carries the post-translational modification N-acetylalanine. Transmembrane regions (helical) follow at residues 47–69 (WLAPNLITFSGFLLVVFNFLLMA), 84–103 (HVPDWVWIVVGILNFVAYTL), 123–145 (LFDHGLDSWSCVYFVVTVYSIFG), 150–172 (GVSVFVLYLLLWVVLFSFILSHW), 179–201 (ILFLPWGYDISQVTISFVYIVTA), 221–243 (LFTAMIIGCALCVTLPMSLLNFF), 256–278 (VYEAMVPLFSPCLLFILSTAWIL), 291–310 (VFYFMVGTAFANSTCQLIVC), 317–339 (CPTLNWLLVPLFLVVLVVNLGVA), and 344–366 (SILLYTLTTAFTLAHIHYGVRVV). U387 is a non-standard amino acid (selenocysteine).

The protein belongs to the CDP-alcohol phosphatidyltransferase class-I family. Mg(2+) serves as cofactor. It depends on Mn(2+) as a cofactor. Widely expressed. Abundant in brain, placenta, liver and pancreas, followed by heart, skeletal muscle, lung and kidney. In brain it is strongly expressed in cerebellum, followed by the occipital pole and the frontal lobe.

It is found in the endoplasmic reticulum membrane. It carries out the reaction CDP-ethanolamine + a 1,2-diacyl-sn-glycerol = a 1,2-diacyl-sn-glycero-3-phosphoethanolamine + CMP + H(+). The catalysed reaction is 1-O-alkyl-2-acyl-sn-glycerol + CDP-ethanolamine = a 1-O-alkyl-2-acyl-sn-glycero-3-phosphoethanolamine + CMP + H(+). It participates in phospholipid metabolism; phosphatidylethanolamine biosynthesis; phosphatidylethanolamine from ethanolamine: step 3/3. Functionally, ethanolaminephosphotransferase that catalyzes the transfer of phosphoethanolamine (PE) from CDP-ethanolamine to lipid acceptors, the final step in the synthesis of PE via the 'Kennedy' pathway. PE is the second most abundant phospholipid of membranes in mammals and is involved in various membrane-related cellular processes. The enzyme is critical for the synthesis of several PE species and also catalyzes the synthesis of plasmanyl-PE, a lipid required for proper myelination and neurodevelopment, from 1-alkyl-2-acylglycerol. The chain is Ethanolaminephosphotransferase 1 from Homo sapiens (Human).